Here is a 183-residue protein sequence, read N- to C-terminus: Small ribosomal subunit protein uS4c (183 aa).

Residues 82–143 (MRLDNILFRL…KQRSKALIQN (62 aa)) enclose the S4 RNA-binding domain.

It belongs to the universal ribosomal protein uS4 family. As to quaternary structure, part of the 30S ribosomal subunit. Contacts protein S5. The interaction surface between S4 and S5 is involved in control of translational fidelity.

It is found in the plastid. Its subcellular location is the chloroplast. One of the primary rRNA binding proteins, it binds directly to 16S rRNA where it nucleates assembly of the body of the 30S subunit. Functionally, with S5 and S12 plays an important role in translational accuracy. This chain is Small ribosomal subunit protein uS4c (rps4), found in Babiana stricta (Baboon flower).